Reading from the N-terminus, the 378-residue chain is MSALLNITEPNNNTNTKNDHFLASLTTDATQSTASKYSREQIAQLFDLPLMDLLLQAQTIHRQNFTANEVQISTLLSIKTGNCPEDCGYCSQSGHHRDKTELVAEKRIEVSKVIAAAKRAKATGSSRFCMGAAWKHPSAKDMPYVVELVKEVKALGLETCMTLGMLDTDQAAQLANAGLDYYNHNLDTSRSYYEQVVSTRSYDERLDTIANVRNSGINVCSGNIVGMGESRDDRIDWVHELLKMPKAPESIPVNLLVPIQGTPIGDKVLAEGQLSVLEWIRTIAVTRICCPSSYVRLSAGRESLSDAEQALAFMAGANSFFYGDKLLTTGNASQSGDDRLMRELGLTKQFSAPRLPKQVPVLDAMSGHQSQVILASLS.

A Radical SAM core domain is found at 68–292; sequence NEVQISTLLS…IAVTRICCPS (225 aa). Residues Cys-83, Cys-87, and Cys-90 each coordinate [4Fe-4S] cluster. [2Fe-2S] cluster-binding residues include Cys-129, Cys-160, Cys-220, and Arg-296.

This sequence belongs to the radical SAM superfamily. Biotin synthase family. Homodimer. Requires [4Fe-4S] cluster as cofactor. It depends on [2Fe-2S] cluster as a cofactor.

The enzyme catalyses (4R,5S)-dethiobiotin + (sulfur carrier)-SH + 2 reduced [2Fe-2S]-[ferredoxin] + 2 S-adenosyl-L-methionine = (sulfur carrier)-H + biotin + 2 5'-deoxyadenosine + 2 L-methionine + 2 oxidized [2Fe-2S]-[ferredoxin]. It functions in the pathway cofactor biosynthesis; biotin biosynthesis; biotin from 7,8-diaminononanoate: step 2/2. Its function is as follows. Catalyzes the conversion of dethiobiotin (DTB) to biotin by the insertion of a sulfur atom into dethiobiotin via a radical-based mechanism. The polypeptide is Biotin synthase (Psychrobacter arcticus (strain DSM 17307 / VKM B-2377 / 273-4)).